The following is a 165-amino-acid chain: NADPH-dependent 7-cyano-7-deazaguanine reductase (165 aa).

Catalysis depends on cysteine 56, which acts as the Thioimide intermediate. Catalysis depends on aspartate 63, which acts as the Proton donor. Residues 78 to 80 and 97 to 98 each bind substrate; these read VES and HE.

The protein belongs to the GTP cyclohydrolase I family. QueF type 1 subfamily.

The protein resides in the cytoplasm. The enzyme catalyses 7-aminomethyl-7-carbaguanine + 2 NADP(+) = 7-cyano-7-deazaguanine + 2 NADPH + 3 H(+). The protein operates within tRNA modification; tRNA-queuosine biosynthesis. Functionally, catalyzes the NADPH-dependent reduction of 7-cyano-7-deazaguanine (preQ0) to 7-aminomethyl-7-deazaguanine (preQ1). The polypeptide is NADPH-dependent 7-cyano-7-deazaguanine reductase (Bacillus licheniformis (strain ATCC 14580 / DSM 13 / JCM 2505 / CCUG 7422 / NBRC 12200 / NCIMB 9375 / NCTC 10341 / NRRL NRS-1264 / Gibson 46)).